We begin with the raw amino-acid sequence, 529 residues long: Inosine-5'-monophosphate dehydrogenase (529 aa).

2 CBS domains span residues 129–185 and 189–246; these read MVTD…SKQV and MTKA…PLAT. Residues aspartate 283 and 334–336 contribute to the NAD(+) site; that span reads GVG. The K(+) site is built by glycine 336 and glycine 338. Serine 339 is a binding site for IMP. A K(+)-binding site is contributed by cysteine 341. Cysteine 341 (thioimidate intermediate) is an active-site residue. IMP-binding positions include 374 to 376, 397 to 398, and 421 to 425; these read DGG, GS, and YRGMG. Catalysis depends on arginine 443, which acts as the Proton acceptor. An IMP-binding site is contributed by glutamate 458. Residues glutamate 511, serine 512, and histidine 513 each coordinate K(+).

It belongs to the IMPDH/GMPR family. Homotetramer. K(+) is required as a cofactor.

It catalyses the reaction IMP + NAD(+) + H2O = XMP + NADH + H(+). The protein operates within purine metabolism; XMP biosynthesis via de novo pathway; XMP from IMP: step 1/1. Mycophenolic acid (MPA) is a non-competitive inhibitor that prevents formation of the closed enzyme conformation by binding to the same site as the amobile flap. In contrast, mizoribine monophosphate (MZP) is a competitive inhibitor that induces the closed conformation. MPA is a potent inhibitor of mammalian IMPDHs but a poor inhibitor of the bacterial enzymes. MZP is a more potent inhibitor of bacterial IMPDH. In terms of biological role, catalyzes the conversion of inosine 5'-phosphate (IMP) to xanthosine 5'-phosphate (XMP), the first committed and rate-limiting step in the de novo synthesis of guanine nucleotides, and therefore plays an important role in the regulation of cell growth. This chain is Inosine-5'-monophosphate dehydrogenase, found in Mycobacterium bovis (strain ATCC BAA-935 / AF2122/97).